The primary structure comprises 370 residues: Chaperone protein DnaJ (370 aa).

The J domain maps to 5–70; sequence DYYEVLGVSK…EKRSMYDRMG (66 aa). A CR-type zinc finger spans residues 134–212; it reads GVKKTITFTA…CHGSGVADRQ (79 aa). Zn(2+) is bound by residues C147, C150, C164, C167, C186, C189, C200, and C203. CXXCXGXG motif repeat units follow at residues 147-154, 164-171, 186-193, and 200-207; these read CDVCDGKG, CKTCHGSG, CGTCRGQG, and CHACHGSG. Residues 351–370 are disordered; the sequence is DGEDSASSPKKKSFFDRLFD.

It belongs to the DnaJ family. In terms of assembly, homodimer. Zn(2+) is required as a cofactor.

It localises to the cytoplasm. In terms of biological role, participates actively in the response to hyperosmotic and heat shock by preventing the aggregation of stress-denatured proteins and by disaggregating proteins, also in an autonomous, DnaK-independent fashion. Unfolded proteins bind initially to DnaJ; upon interaction with the DnaJ-bound protein, DnaK hydrolyzes its bound ATP, resulting in the formation of a stable complex. GrpE releases ADP from DnaK; ATP binding to DnaK triggers the release of the substrate protein, thus completing the reaction cycle. Several rounds of ATP-dependent interactions between DnaJ, DnaK and GrpE are required for fully efficient folding. Also involved, together with DnaK and GrpE, in the DNA replication of plasmids through activation of initiation proteins. The sequence is that of Chaperone protein DnaJ from Acinetobacter baumannii (strain AB0057).